The following is a 523-amino-acid chain: Jerky protein homolog-like (523 aa).

In terms of domain architecture, HTH psq-type spans 1–52 (MSGKRKRVVLTIKDKLDIIKKLEDGGSSKQLAVIYGIGETTVRDIRKNKEKI). 2 consecutive DNA-binding regions (H-T-H motif) follow at residues 28–48 (SKQL…IRKN) and 100–132 (PICA…FKQR). One can recognise an HTH CENPB-type domain in the interval 67 to 139 (KRKSMKPSMY…KQRHSIREIN (73 aa)). The DDE-1 domain occupies 168 to 385 (LQPEQIYNAD…VKPVTISRAW (218 aa)).

Belongs to the tigger transposable element derived protein family.

Its subcellular location is the nucleus. This Mus musculus (Mouse) protein is Jerky protein homolog-like (Jrkl).